The sequence spans 420 residues: Histidine--tRNA ligase (420 aa).

This sequence belongs to the class-II aminoacyl-tRNA synthetase family. In terms of assembly, homodimer.

The protein localises to the cytoplasm. It catalyses the reaction tRNA(His) + L-histidine + ATP = L-histidyl-tRNA(His) + AMP + diphosphate + H(+). In Thermotoga sp. (strain RQ2), this protein is Histidine--tRNA ligase.